Here is a 784-residue protein sequence, read N- to C-terminus: MPKTSSAKPGRLSSKFWKLLGASTERNQARSLSEVKGAADFEKKAADLDDEQLTKAAKLLKLEDLAGASDITQFLAIAREAAERTTGLRPFDVQLLAALRMLAGDVVEMATGEGKTLAGAIAAAGYALGGRRVHVITINDYLARRDAEWMGPLLKALGLTVGWITADSTADERREAYQCDVTYASVNEIGFDVLRDQLVTDVADLVSPNPDVALIDEADSVLVDEALVPLVLAGTSHREQPRVEIIRMVGELEAGKHYDTDAESRNVHLTEAGARVMEAKLGGIDLYSEEHVGTTLTEINVALHAHVLLQRDVHYIVRDDAVHLINASRGRIASLQRWPDGLQAAVEAKEGIETTETGEVLDTITVQALINRYPRVCGMTGTALAAGEQLRQFYKLGVSPIPPNTPNIRKDEPDRVYITAAAKIDAIVEHIAEVHKTGQPVLVGTHDVAESEELHEKLLKAGVPAVVLNAKNDAEEAAVIAEAGKLGAVTVSTQMAGRGTDIRLGGSDVGDDDAEKKKVAELGGLHVVGTGRHHTERLDNQLRGRAGRQGDPGSSVFFSSWEDDVVAAHLERSKLPMETDPDAGDGRIIAPRAASLLDHAQRVAEGRLLDVHANTWRYNQLIAQQRAIIVERRETLLRTDTAREELKERSPERYAKLAEELGEDAEERLEKICRLIMLYHLDRGWCEHLAFLADIRESIHLRALGRQNPLDEFHRMAVDAFASLAADAIEAAQQTFETAESVADEPGVDLSKLARPTSTWTYMVHDNPLADDTMSALSLPGVFR.

ATP-binding positions include Gln94, Gly112 to Thr116, and Asp501.

The protein belongs to the SecA family. As to quaternary structure, monomer and homodimer. Part of the essential Sec protein translocation apparatus which comprises SecA, SecYEG and auxiliary proteins SecDF. Other proteins may also be involved.

It localises to the cell membrane. The protein localises to the cytoplasm. It carries out the reaction ATP + H2O + cellular proteinSide 1 = ADP + phosphate + cellular proteinSide 2.. Functionally, part of the Sec protein translocase complex. Interacts with the SecYEG preprotein conducting channel. Has a central role in coupling the hydrolysis of ATP to the transfer of proteins into and across the cell membrane, serving as an ATP-driven molecular motor driving the stepwise translocation of polypeptide chains across the membrane. This is Protein translocase subunit SecA 2 from Mycolicibacterium smegmatis (strain ATCC 700084 / mc(2)155) (Mycobacterium smegmatis).